The sequence spans 806 residues: Leucine--tRNA ligase (806 aa).

The 'HIGH' region motif lies at Pro40–His51. Residues Lys576–Ser580 carry the 'KMSKS' region motif. Lys579 is an ATP binding site.

This sequence belongs to the class-I aminoacyl-tRNA synthetase family.

The protein localises to the cytoplasm. It carries out the reaction tRNA(Leu) + L-leucine + ATP = L-leucyl-tRNA(Leu) + AMP + diphosphate. In Prosthecochloris aestuarii (strain DSM 271 / SK 413), this protein is Leucine--tRNA ligase.